Here is a 125-residue protein sequence, read N- to C-terminus: Unclassified hydrophobin 8 (125 aa).

The first 20 residues, 1–20 (MMFSKPVVLATTALATFAAA), serve as a signal peptide directing secretion. 4 cysteine pairs are disulfide-bonded: cysteine 31/cysteine 105, cysteine 38/cysteine 99, cysteine 39/cysteine 90, and cysteine 106/cysteine 119.

It belongs to the fungal hydrophobin family. Self-assembles to form functional amyloid fibrils called rodlets. Self-assembly into fibrillar rodlets occurs spontaneously at hydrophobic:hydrophilic interfaces and the rodlets further associate laterally to form amphipathic monolayers.

It is found in the secreted. The protein resides in the cell wall. In terms of biological role, aerial growth, conidiation, and dispersal of filamentous fungi in the environment rely upon a capability of their secreting small amphipathic proteins called hydrophobins (HPBs) with low sequence identity. Class I can self-assemble into an outermost layer of rodlet bundles on aerial cell surfaces, conferring cellular hydrophobicity that supports fungal growth, development and dispersal; whereas Class II form highly ordered films at water-air interfaces through intermolecular interactions but contribute nothing to the rodlet structure. Hydph8 is an unclassified hydrophobin involved in mycelial growth. This chain is Unclassified hydrophobin 8, found in Pleurotus ostreatus (strain PC15) (Oyster mushroom).